A 324-amino-acid polypeptide reads, in one-letter code: Glucosyl-3-phosphoglycerate synthase (324 aa).

Residues 50-54 (PALNE), serine 81, lysine 114, and 134-135 (DS) contribute to the UDP-alpha-D-glucose site. Aspartate 136 serves as a coordination point for Mn(2+). (2R)-3-phosphoglycerate is bound at residue 184–187 (GRVT). Residues 229–232 (YGVE) and 256–261 (RAHRNR) each bind UDP-alpha-D-glucose. Mn(2+) is bound at residue histidine 258. Residue asparagine 260 participates in (2R)-3-phosphoglycerate binding.

Belongs to the glycosyltransferase 2 family. As to quaternary structure, homotrimer. Mg(2+) is required as a cofactor. The cofactor is Mn(2+).

It catalyses the reaction an NDP-alpha-D-glucose + (2R)-3-phosphoglycerate = (2R)-2-O-(alpha-D-glucopyranosyl)-3-phospho-glycerate + a ribonucleoside 5'-diphosphate + H(+). It carries out the reaction (2R)-3-phosphoglycerate + UDP-alpha-D-glucose = (2R)-2-O-(alpha-D-glucopyranosyl)-3-phospho-glycerate + UDP + H(+). The catalysed reaction is ADP-alpha-D-glucose + (2R)-3-phosphoglycerate = (2R)-2-O-(alpha-D-glucopyranosyl)-3-phospho-glycerate + ADP + H(+). The enzyme catalyses GDP-D-glucose + (2R)-3-phosphoglycerate = (2R)-2-O-(alpha-D-glucopyranosyl)-3-phospho-glycerate + GDP + H(+). Functionally, involved in the biosynthesis of 6-O-methylglucose lipopolysaccarides (MGLPs). Catalyzes the transfer of the glucose moiety from a nuleotide sugar such as UDP-alpha-D-glucose to the position 2 of 3-phospho-D-glycerate (3-PGA) to form glucosyl-3-phosphoglycerate (GPG). It can use UDP-glucose, ADP-glucose and GDP-glucose as sugar donor substrates with decreasing affinity and with 3-PGA as an acceptor. D-glycerate can only be an acceptor with ADP-glucose and at a very low rate. The chain is Glucosyl-3-phosphoglycerate synthase (gpgS) from Mycobacterium bovis (strain ATCC BAA-935 / AF2122/97).